We begin with the raw amino-acid sequence, 347 residues long: Protein RecA (347 aa).

Residue 67–74 (GPESSGKT) participates in ATP binding. The segment at 327–347 (ALGLSSPTPKENGKEKGKAKP) is disordered. The segment covering 337–347 (ENGKEKGKAKP) has biased composition (basic and acidic residues).

It belongs to the RecA family.

The protein localises to the cytoplasm. Functionally, can catalyze the hydrolysis of ATP in the presence of single-stranded DNA, the ATP-dependent uptake of single-stranded DNA by duplex DNA, and the ATP-dependent hybridization of homologous single-stranded DNAs. It interacts with LexA causing its activation and leading to its autocatalytic cleavage. This chain is Protein RecA, found in Desulforapulum autotrophicum (strain ATCC 43914 / DSM 3382 / VKM B-1955 / HRM2) (Desulfobacterium autotrophicum).